A 960-amino-acid polypeptide reads, in one-letter code: Glycine dehydrogenase (decarboxylating) (960 aa).

N6-(pyridoxal phosphate)lysine is present on lysine 709.

This sequence belongs to the GcvP family. As to quaternary structure, the glycine cleavage system is composed of four proteins: P, T, L and H. Requires pyridoxal 5'-phosphate as cofactor.

It catalyses the reaction N(6)-[(R)-lipoyl]-L-lysyl-[glycine-cleavage complex H protein] + glycine + H(+) = N(6)-[(R)-S(8)-aminomethyldihydrolipoyl]-L-lysyl-[glycine-cleavage complex H protein] + CO2. In terms of biological role, the glycine cleavage system catalyzes the degradation of glycine. The P protein binds the alpha-amino group of glycine through its pyridoxal phosphate cofactor; CO(2) is released and the remaining methylamine moiety is then transferred to the lipoamide cofactor of the H protein. The protein is Glycine dehydrogenase (decarboxylating) of Hahella chejuensis (strain KCTC 2396).